A 540-amino-acid polypeptide reads, in one-letter code: Phosphoenolpyruvate carboxykinase (ATP) (540 aa).

Arg65 contributes to the substrate binding site. N6-acetyllysine is present on Lys87. 2 residues coordinate substrate: Tyr207 and Lys213. ATP contacts are provided by residues Lys213, His232, and 248-256 (GLSGTGKTT). The Mn(2+) site is built by Lys213 and His232. Mn(2+) is bound at residue Asp269. Residues Glu297, Arg333, 449–450 (RI), and Thr455 each bind ATP. Position 333 (Arg333) interacts with substrate. Residue Lys523 is modified to N6-acetyllysine.

This sequence belongs to the phosphoenolpyruvate carboxykinase (ATP) family. Monomer. Requires Mn(2+) as cofactor.

It is found in the cytoplasm. The catalysed reaction is oxaloacetate + ATP = phosphoenolpyruvate + ADP + CO2. The protein operates within carbohydrate biosynthesis; gluconeogenesis. In terms of biological role, involved in the gluconeogenesis. Catalyzes the conversion of oxaloacetate (OAA) to phosphoenolpyruvate (PEP) through direct phosphoryl transfer between the nucleoside triphosphate and OAA. The protein is Phosphoenolpyruvate carboxykinase (ATP) of Shigella flexneri.